The chain runs to 336 residues: Biotin synthase (336 aa).

The region spanning 54 to 281 is the Radical SAM core domain; it reads NAIQLSTLLS…KAMVRLSAGR (228 aa). Positions 69, 73, and 76 each coordinate [4Fe-4S] cluster. 4 residues coordinate [2Fe-2S] cluster: Cys-113, Cys-144, Cys-204, and Arg-276.

It belongs to the radical SAM superfamily. Biotin synthase family. In terms of assembly, homodimer. The cofactor is [4Fe-4S] cluster. [2Fe-2S] cluster serves as cofactor.

It catalyses the reaction (4R,5S)-dethiobiotin + (sulfur carrier)-SH + 2 reduced [2Fe-2S]-[ferredoxin] + 2 S-adenosyl-L-methionine = (sulfur carrier)-H + biotin + 2 5'-deoxyadenosine + 2 L-methionine + 2 oxidized [2Fe-2S]-[ferredoxin]. The protein operates within cofactor biosynthesis; biotin biosynthesis; biotin from 7,8-diaminononanoate: step 2/2. In terms of biological role, catalyzes the conversion of dethiobiotin (DTB) to biotin by the insertion of a sulfur atom into dethiobiotin via a radical-based mechanism. This is Biotin synthase from Burkholderia mallei (strain ATCC 23344).